We begin with the raw amino-acid sequence, 517 residues long: Keratin-associated protein 16-1 (517 aa).

11 tandem repeats follow at residues 73–77 (CCDPV), 93–97 (CCEAT), 128–132 (CCQPV), 153–157 (CCEPA), 168–172 (CCQPV), 198–202 (CCQPV), 208–212 (CCSAV), 228–232 (CCQPV), 248–252 (CCDPS), 283–287 (CCVQS), and 303–307 (CCVSS). The interval 73–307 (CCDPVICEPS…CQEPSCCVSS (235 aa)) is 11 X 5 AA repeats of C-C-X(3). A disordered region spans residues 483 to 517 (VSEEAPCQPTEAKPISPTTREAAAAQPAASKPANC). A compositionally biased stretch (low complexity) spans 504 to 517 (AAAAQPAASKPANC).

This sequence belongs to the KRTAP type 16 family.

This Homo sapiens (Human) protein is Keratin-associated protein 16-1 (KRTAP16-1).